A 309-amino-acid polypeptide reads, in one-letter code: tRNA pseudouridine synthase B (309 aa).

Asp39 (nucleophile) is an active-site residue.

The protein belongs to the pseudouridine synthase TruB family. Type 1 subfamily.

The catalysed reaction is uridine(55) in tRNA = pseudouridine(55) in tRNA. Responsible for synthesis of pseudouridine from uracil-55 in the psi GC loop of transfer RNAs. This is tRNA pseudouridine synthase B from Bacillus velezensis (strain DSM 23117 / BGSC 10A6 / LMG 26770 / FZB42) (Bacillus amyloliquefaciens subsp. plantarum).